The sequence spans 136 residues: Secreted RxLR effector protein 10 (136 aa).

Positions 1-22 are cleaved as a signal peptide; that stretch reads MRVLNFVLTTTVVLLTSSEGIA. Residues 42 to 56 carry the RxLR-dEER motif; the sequence is RSLRATENPGSDESR. The tract at residues 42 to 78 is disordered; that stretch reads RSLRATENPGSDESRLNEKDTGFDPDGSSSKEDEDIG. Basic and acidic residues predominate over residues 53 to 63; sequence DESRLNEKDTG.

Belongs to the RxLR effector family.

The protein resides in the secreted. Its subcellular location is the host cytoplasm. The protein localises to the host nucleus. Its function is as follows. Effector that acts as a broad suppressor of cell death to interrupt plant immunity. Inhibits cell death induced by cell death-inducing proteins, including the PAMP elicitor INF1 from P.infestans. The protein is Secreted RxLR effector protein 10 of Plasmopara viticola (Downy mildew of grapevine).